We begin with the raw amino-acid sequence, 345 residues long: sn-glycerol-3-phosphate import ATP-binding protein UgpC (345 aa).

The ABC transporter domain occupies 4–235; the sequence is IQLLNIKKQY…PKTIFVADFI (232 aa). Position 37–44 (37–44) interacts with ATP; that stretch reads GPSGCGKS.

It belongs to the ABC transporter superfamily. sn-glycerol-3-phosphate importer (TC 3.A.1.1.3) family. In terms of assembly, the complex is composed of two ATP-binding proteins (UgpC), two transmembrane proteins (UgpA and UgpE) and a solute-binding protein (UgpB).

The protein localises to the cell inner membrane. It catalyses the reaction sn-glycerol 3-phosphate(out) + ATP + H2O = sn-glycerol 3-phosphate(in) + ADP + phosphate + H(+). Part of the ABC transporter complex UgpBAEC involved in sn-glycerol-3-phosphate (G3P) import. Responsible for energy coupling to the transport system. The polypeptide is sn-glycerol-3-phosphate import ATP-binding protein UgpC (Bartonella bacilliformis (strain ATCC 35685 / KC583 / Herrer 020/F12,63)).